The following is a 423-amino-acid chain: Polyglutamylase complex subunit TTLL1 (423 aa).

In terms of domain architecture, TTL spans 1–367; that stretch reads MAGKVKWVTD…NGEIPDCKWN (367 aa). ATP contacts are provided by residues lysine 138, 144-145, 181-184, and 194-196; these read QG, SLYI, and KFD. Residue glutamine 144 participates in a protein binding. Position 220 (arginine 220) interacts with L-glutamate. 241–242 is an ATP binding site; the sequence is TN. L-glutamate is bound at residue lysine 259. Positions 313, 326, and 328 each coordinate Mg(2+). Lysine 344 is an L-glutamate binding site. A disordered region spans residues 391 to 423; the sequence is GADRELRSRQGQSLGPRAGRSRDSGRAVLTTWK.

Belongs to the tubulin polyglutamylase family. Part of the neuronal tubulin polyglutamylase complex which contains TPGS1, TPGS2, TTLL1, LRRC49 and NICN1. Interacts with PCM1, CSTPP1 and LRRC49. It depends on Mg(2+) as a cofactor. Expressed in a wide range of tissues. Has a stronger expression in heart, brain and testis.

The protein resides in the cytoplasm. It localises to the cytoskeleton. The protein localises to the cilium basal body. Its subcellular location is the cilium axoneme. It is found in the cell projection. The protein resides in the cilium. It localises to the flagellum. It catalyses the reaction (L-glutamyl)(n)-gamma-L-glutamyl-L-glutamyl-[protein] + L-glutamate + ATP = (L-glutamyl)(n+1)-gamma-L-glutamyl-L-glutamyl-[protein] + ADP + phosphate + H(+). In terms of biological role, catalytic subunit of a polyglutamylase complex which modifies tubulin, generating side chains of glutamate on the gamma-carboxyl group of specific glutamate residues within the C-terminal tail of tubulin. Probably involved in the side-chain elongation step of the polyglutamylation reaction rather than the initiation step. Modifies both alpha- and beta-tubulins with a preference for the alpha-tail. Unlike most polyglutamylases of the tubulin--tyrosine ligase family, only displays a catalytic activity when in complex with other proteins as it is most likely lacking domains important for autonomous activity. Part of the neuronal tubulin polyglutamylase complex. Mediates cilia and flagella polyglutamylation which is essential for their biogenesis and motility. Involved in respiratory motile cilia function through the regulation of beating asymmetry. Essential for sperm flagella biogenesis, motility and male fertility. Involved in KLF4 glutamylation which impedes its ubiquitination, thereby leading to somatic cell reprogramming, pluripotency maintenance and embryogenesis. This chain is Polyglutamylase complex subunit TTLL1, found in Homo sapiens (Human).